Here is a 402-residue protein sequence, read N- to C-terminus: uncharacterized protein (402 aa).

Transmembrane regions (helical) follow at residues 12 to 32 (FWLI…ITSV), 48 to 68 (GAAG…SPLA), 80 to 100 (TLWL…TGYT), 101 to 121 (AALF…NVLL), 134 to 154 (GIMI…ASGV), 168 to 188 (QAFL…IPQL), 212 to 232 (WYVT…IAWF), 248 to 268 (WMVS…PVLA), 291 to 311 (GLLA…IGIG), 339 to 359 (MSQS…GYLF), and 367 to 387 (MPIV…QGAG).

The protein belongs to the major facilitator superfamily. Cyanate porter (TC 2.A.1.17) family.

It localises to the cell membrane. This is an uncharacterized protein from Bacillus subtilis (strain 168).